Reading from the N-terminus, the 831-residue chain is Multiphosphoryl transfer protein (831 aa).

The HPr domain maps to methionine 1 to serine 90. The active-site Pros-phosphohistidine intermediate; for HPr activity is the histidine 15. Histidine 15 carries the phosphohistidine; by EI modification. The PTS EI stretch occupies residues glycine 119–aspartate 650. Catalysis depends on histidine 298, which acts as the Tele-phosphohistidine intermediate; for PTS EI activity. Histidine 298 carries the post-translational modification Phosphohistidine; by autocatalysis. 2 residues coordinate phosphoenolpyruvate: arginine 405 and arginine 441. The Mg(2+) site is built by glutamate 540 and aspartate 564. Phosphoenolpyruvate is bound by residues asparagine 563–aspartate 564 and arginine 574. Cysteine 611 functions as the Proton donor; for EI activity in the catalytic mechanism. The region spanning proline 685–glutamate 828 is the PTS EIIA type-2 domain. The active-site Tele-phosphohistidine intermediate; for PTS EIIA activity is histidine 747. Residue histidine 747 is modified to Phosphohistidine; by HPr.

The protein belongs to the PEP-utilizing enzyme family. Mg(2+) is required as a cofactor.

It is found in the cytoplasm. It carries out the reaction L-histidyl-[protein] + phosphoenolpyruvate = N(pros)-phospho-L-histidyl-[protein] + pyruvate. The enzyme catalyses D-fructose(out) + N(pros)-phospho-L-histidyl-[protein] = D-fructose 1-phosphate(in) + L-histidyl-[protein]. Its function is as follows. Multifunctional protein that includes general (non sugar-specific) and sugar-specific components of the phosphoenolpyruvate-dependent sugar phosphotransferase system (sugar PTS). This major carbohydrate active transport system catalyzes the phosphorylation of incoming sugar substrates concomitantly with their translocation across the cell membrane. The enzyme II FryABC PTS system is involved in fructose transport. The chain is Multiphosphoryl transfer protein (fryA) from Escherichia coli O157:H7.